The sequence spans 159 residues: MADHSKNEAAAYALKLLSLRSHSRFELAGKMLRKGYRKELVEEVLDYLVQKQLIDDEAFAKELIGSRSRRKPVGKRKMQFDLIRKGVPENIADALLKEYDGAELCYRAGVRKAAALKGRDESERKKKLEVFLRNRGFDWPVIKETITRLFQTGPECEND.

It belongs to the RecX family.

The protein resides in the cytoplasm. Its function is as follows. Modulates RecA activity. The polypeptide is Regulatory protein RecX (Chlorobium limicola (strain DSM 245 / NBRC 103803 / 6330)).